Reading from the N-terminus, the 169-residue chain is Large ribosomal subunit protein uL10 (169 aa).

This sequence belongs to the universal ribosomal protein uL10 family. In terms of assembly, part of the ribosomal stalk of the 50S ribosomal subunit. The N-terminus interacts with L11 and the large rRNA to form the base of the stalk. The C-terminus forms an elongated spine to which L12 dimers bind in a sequential fashion forming a multimeric L10(L12)X complex.

Functionally, forms part of the ribosomal stalk, playing a central role in the interaction of the ribosome with GTP-bound translation factors. This Lactobacillus delbrueckii subsp. bulgaricus (strain ATCC 11842 / DSM 20081 / BCRC 10696 / JCM 1002 / NBRC 13953 / NCIMB 11778 / NCTC 12712 / WDCM 00102 / Lb 14) protein is Large ribosomal subunit protein uL10.